The following is a 99-amino-acid chain: Translation initiation factor 1A (99 aa).

One can recognise an S1-like domain in the interval 11-84 (RRVRTPRRGE…EKADIVWRYT (74 aa)).

Belongs to the eIF-1A family.

In terms of biological role, seems to be required for maximal rate of protein biosynthesis. Enhances ribosome dissociation into subunits and stabilizes the binding of the initiator Met-tRNA(I) to 40 S ribosomal subunits. The polypeptide is Translation initiation factor 1A (eIF1A) (Methanothermobacter thermautotrophicus (strain ATCC 29096 / DSM 1053 / JCM 10044 / NBRC 100330 / Delta H) (Methanobacterium thermoautotrophicum)).